We begin with the raw amino-acid sequence, 161 residues long: E3 ubiquitin ligase complex SCF subunit sconC (161 aa).

The tract at residues 102–161 (ILAANYLDIKPLLDIGCKTVANMIKGKSPEEIRKTFNIQNDFTPEEEDQIRRENEWAEDR) is interaction with the F-box domain of F-box proteins.

It belongs to the SKP1 family. As to quaternary structure, component of the SCF (SKP1-CUL1-F-box protein) E3 ubiquitin ligase complexes.

The protein operates within protein modification; protein ubiquitination. In terms of biological role, essential component of the SCF (SKP1-CUL1-F-box protein) E3 ubiquitin ligase complexes, which mediate the ubiquitination and subsequent proteasomal degradation of target proteins. Controls sulfur metabolite repression, probably by mediating the inactivation or degradation of the metR transcription factor. This Emericella nidulans (strain FGSC A4 / ATCC 38163 / CBS 112.46 / NRRL 194 / M139) (Aspergillus nidulans) protein is E3 ubiquitin ligase complex SCF subunit sconC (sconC).